We begin with the raw amino-acid sequence, 117 residues long: Large ribosomal subunit protein bL20 (117 aa).

Belongs to the bacterial ribosomal protein bL20 family.

Binds directly to 23S ribosomal RNA and is necessary for the in vitro assembly process of the 50S ribosomal subunit. It is not involved in the protein synthesizing functions of that subunit. This Geotalea daltonii (strain DSM 22248 / JCM 15807 / FRC-32) (Geobacter daltonii) protein is Large ribosomal subunit protein bL20.